The following is a 285-amino-acid chain: Small ribosomal subunit biogenesis GTPase RsgA (285 aa).

In terms of domain architecture, CP-type G spans 61–215; it reads KNQLIRPKVA…IIDSPGFSSF (155 aa). GTP contacts are provided by residues 110–113 and 159–167; these read TKID and GQTGVGKTS. Zn(2+)-binding residues include Cys239, Cys244, His246, and Cys254.

The protein belongs to the TRAFAC class YlqF/YawG GTPase family. RsgA subfamily. Monomer. Associates with 30S ribosomal subunit, binds 16S rRNA. It depends on Zn(2+) as a cofactor.

The protein localises to the cytoplasm. One of several proteins that assist in the late maturation steps of the functional core of the 30S ribosomal subunit. Helps release RbfA from mature subunits. May play a role in the assembly of ribosomal proteins into the subunit. Circularly permuted GTPase that catalyzes slow GTP hydrolysis, GTPase activity is stimulated by the 30S ribosomal subunit. This Mesomycoplasma hyopneumoniae (strain J / ATCC 25934 / NCTC 10110) (Mycoplasma hyopneumoniae) protein is Small ribosomal subunit biogenesis GTPase RsgA.